The primary structure comprises 287 residues: D-alanine--D-alanine ligase (287 aa).

One can recognise an ATP-grasp domain in the interval 98–283 (KTKQIAQSVG…FDDVVRITVE (186 aa)). Residue 124-169 (PVIIKPVDEGSSKGLFLCNNKEEAEEAVKKLAKPIIEDYIIGEELT) coordinates ATP. Asp-238, Glu-250, and Asn-252 together coordinate Mg(2+).

It belongs to the D-alanine--D-alanine ligase family. Mg(2+) is required as a cofactor. Requires Mn(2+) as cofactor.

It localises to the cytoplasm. It catalyses the reaction 2 D-alanine + ATP = D-alanyl-D-alanine + ADP + phosphate + H(+). It participates in cell wall biogenesis; peptidoglycan biosynthesis. In terms of biological role, cell wall formation. The protein is D-alanine--D-alanine ligase of Fusobacterium nucleatum subsp. nucleatum (strain ATCC 25586 / DSM 15643 / BCRC 10681 / CIP 101130 / JCM 8532 / KCTC 2640 / LMG 13131 / VPI 4355).